We begin with the raw amino-acid sequence, 554 residues long: Protein translocase subunit SecD (554 aa).

Helical transmembrane passes span 10 to 30 (LVIL…MFYA), 392 to 412 (AGMV…IASY), 414 to 434 (LFGF…FAVM), 435 to 455 (GAIG…TIGT), 491 to 511 (AIID…VLGA), and 516 to 536 (GFAV…IWVV).

The protein belongs to the SecD/SecF family. SecD subfamily. As to quaternary structure, forms a complex with SecF. Part of the essential Sec protein translocation apparatus which comprises SecA, SecYEG and auxiliary proteins SecDF-YajC and YidC.

Its subcellular location is the cell inner membrane. Functionally, part of the Sec protein translocase complex. Interacts with the SecYEG preprotein conducting channel. SecDF uses the proton motive force (PMF) to complete protein translocation after the ATP-dependent function of SecA. This chain is Protein translocase subunit SecD, found in Rhodobacter capsulatus (strain ATCC BAA-309 / NBRC 16581 / SB1003).